The chain runs to 359 residues: Phospho-N-acetylmuramoyl-pentapeptide-transferase (359 aa).

10 helical membrane passes run 3 to 23 (QILV…PALI), 55 to 75 (VAIV…GLAF), 80 to 100 (VSAS…VGFL), 117 to 137 (TAKT…VLQF), 156 to 176 (IATV…IVSA), 187 to 207 (LDGL…LITF), 231 to 251 (LTLI…WNAA), 255 to 275 (IFMG…LSVT), 280 to 300 (ILAV…VLQI), and 334 to 354 (FWLL…GEWL).

It belongs to the glycosyltransferase 4 family. MraY subfamily. Mg(2+) is required as a cofactor.

The protein resides in the cell membrane. The enzyme catalyses UDP-N-acetyl-alpha-D-muramoyl-L-alanyl-gamma-D-glutamyl-meso-2,6-diaminopimeloyl-D-alanyl-D-alanine + di-trans,octa-cis-undecaprenyl phosphate = di-trans,octa-cis-undecaprenyl diphospho-N-acetyl-alpha-D-muramoyl-L-alanyl-D-glutamyl-meso-2,6-diaminopimeloyl-D-alanyl-D-alanine + UMP. It participates in cell wall biogenesis; peptidoglycan biosynthesis. In terms of biological role, catalyzes the initial step of the lipid cycle reactions in the biosynthesis of the cell wall peptidoglycan: transfers peptidoglycan precursor phospho-MurNAc-pentapeptide from UDP-MurNAc-pentapeptide onto the lipid carrier undecaprenyl phosphate, yielding undecaprenyl-pyrophosphoryl-MurNAc-pentapeptide, known as lipid I. The chain is Phospho-N-acetylmuramoyl-pentapeptide-transferase from Mycobacterium leprae (strain TN).